Reading from the N-terminus, the 531-residue chain is Protein RPN4 (531 aa).

Positions 338–432 (RFPSPSTSAN…PSAHTSSSDG (95 aa)) are disordered. Over residues 341–354 (SPSTSANVPSTATT) the composition is skewed to polar residues. The segment covering 362-375 (SSSNRSCVSNSNEN) has biased composition (low complexity). The Nuclear localization signal signature appears at 382–398 (KKPTSAVVSSNASRRKL). Basic residues predominate over residues 394–407 (SRRKLINYTKKHLS). Low complexity predominate over residues 408–430 (SHSSTNSNSKPSTASPSAHTSSS).

In terms of assembly, probably interacts with SEC63. Interacts with MUB1, UBR2 and RPN2. Ubiquitinated by UBR2 in the presence of UBC2; which leads to proteasomal degradation.

It localises to the nucleus. In terms of biological role, acts as a transcriptional activator of a number of genes encoding proteasomal subunits. Binds to a PACE (proteasome-associated control element) DNA sequence 5'-GGTGGCAAA-3'. Its expression is in turn regulated by the 26S proteasome, thereby providing a negative feedback control mechanism. Required for normal growth at low temperatures. This is Protein RPN4 (RPN4) from Saccharomyces cerevisiae (strain ATCC 204508 / S288c) (Baker's yeast).